We begin with the raw amino-acid sequence, 398 residues long: Succinate--CoA ligase [ADP-forming] subunit beta (398 aa).

The region spanning lysine 9–glutamate 254 is the ATP-grasp domain. ATP is bound by residues lysine 46, glycine 53–glycine 55, glutamate 109, serine 112, and glutamate 117. Mg(2+) is bound by residues asparagine 209 and aspartate 223. Substrate contacts are provided by residues asparagine 274 and glycine 331 to methionine 333.

It belongs to the succinate/malate CoA ligase beta subunit family. As to quaternary structure, heterotetramer of two alpha and two beta subunits. Mg(2+) serves as cofactor.

It carries out the reaction succinate + ATP + CoA = succinyl-CoA + ADP + phosphate. The enzyme catalyses GTP + succinate + CoA = succinyl-CoA + GDP + phosphate. It participates in carbohydrate metabolism; tricarboxylic acid cycle; succinate from succinyl-CoA (ligase route): step 1/1. Its function is as follows. Succinyl-CoA synthetase functions in the citric acid cycle (TCA), coupling the hydrolysis of succinyl-CoA to the synthesis of either ATP or GTP and thus represents the only step of substrate-level phosphorylation in the TCA. The beta subunit provides nucleotide specificity of the enzyme and binds the substrate succinate, while the binding sites for coenzyme A and phosphate are found in the alpha subunit. This Bradyrhizobium sp. (strain BTAi1 / ATCC BAA-1182) protein is Succinate--CoA ligase [ADP-forming] subunit beta.